The sequence spans 67 residues: Conotoxin Cl14.2b (67 aa).

The signal sequence occupies residues 1–20 (MNVTVMFLVLLLLTMPLTDG). Residues 21-48 (FNIRATNGGELFGPVQRDAGNVLDHGFQ) constitute a propeptide that is removed on maturation.

The protein belongs to the conotoxin L superfamily. In terms of processing, contains 2 disulfide bonds. Expressed by the venom duct.

The protein localises to the secreted. Its function is as follows. Increases calcium current amplitude through Cav1.2/Cav1.3 channels in rat pancreatic beta-cells, which is a prerequisite for eliciting insulin secretion. Stimulates insulin secretion in NIT-1 insulinoma cell lines. In vivo, significantly decreases mice blood glucose levels as of 45 minutes after treatment, similarly to insulin treatment. Has a potential therapeutic use in endocrinal pathologies such as early stages of type 2 diabetes where the pancreas's capability to produce insulin is still effective. The protein is Conotoxin Cl14.2b of Californiconus californicus (California cone).